Here is a 123-residue protein sequence, read N- to C-terminus: MAENRRMKKVNAMLREAIAKVILKDVKHPKISNRWITITRVSLSRDLQSACVYVSIMPHENSQEETLAALKASAGFIAFQASKDLVLKYFPDLNFYLEDIFSPQDHIESLLLKIAEQDKKTNP.

Belongs to the RbfA family. As to quaternary structure, monomer. Binds 30S ribosomal subunits, but not 50S ribosomal subunits or 70S ribosomes.

The protein localises to the cytoplasm. In terms of biological role, one of several proteins that assist in the late maturation steps of the functional core of the 30S ribosomal subunit. Associates with free 30S ribosomal subunits (but not with 30S subunits that are part of 70S ribosomes or polysomes). Required for efficient processing of 16S rRNA. May interact with the 5'-terminal helix region of 16S rRNA. The polypeptide is Ribosome-binding factor A (Chlamydia trachomatis serovar A (strain ATCC VR-571B / DSM 19440 / HAR-13)).